We begin with the raw amino-acid sequence, 268 residues long: GTP cyclohydrolase III (268 aa).

It belongs to the archaeal-type GTP cyclohydrolase family. Homotrimer. Mg(2+) serves as cofactor.

The catalysed reaction is GTP + 3 H2O = 2-amino-5-formylamino-6-(5-phospho-D-ribosylamino)pyrimidin-4(3H)-one + 2 phosphate + 2 H(+). In terms of biological role, catalyzes the formation of 2-amino-5-formylamino-6-ribofuranosylamino-4(3H)-pyrimidinone ribonucleotide monophosphate and inorganic phosphate from GTP. Also has an independent pyrophosphate phosphohydrolase activity. The polypeptide is GTP cyclohydrolase III (gch3) (Methanocaldococcus jannaschii (strain ATCC 43067 / DSM 2661 / JAL-1 / JCM 10045 / NBRC 100440) (Methanococcus jannaschii)).